A 304-amino-acid polypeptide reads, in one-letter code: UDP-N-acetylenolpyruvoylglucosamine reductase (304 aa).

The 166-residue stretch at Arg-31–Gly-196 folds into the FAD-binding PCMH-type domain. Arg-176 is an active-site residue. Ser-225 functions as the Proton donor in the catalytic mechanism. Glu-295 is a catalytic residue.

The protein belongs to the MurB family. It depends on FAD as a cofactor.

The protein resides in the cytoplasm. The enzyme catalyses UDP-N-acetyl-alpha-D-muramate + NADP(+) = UDP-N-acetyl-3-O-(1-carboxyvinyl)-alpha-D-glucosamine + NADPH + H(+). Its pathway is cell wall biogenesis; peptidoglycan biosynthesis. Cell wall formation. This Methylococcus capsulatus (strain ATCC 33009 / NCIMB 11132 / Bath) protein is UDP-N-acetylenolpyruvoylglucosamine reductase.